The primary structure comprises 228 residues: Tumor necrosis factor receptor superfamily member 18 (228 aa).

The first 19 residues, 1–19, serve as a signal peptide directing secretion; it reads MGAWAMLYGVSMLCVLDLG. The Extracellular portion of the chain corresponds to 20 to 153; it reads QPSVVEEPGC…EPLPTEQYGH (134 aa). TNFR-Cys repeat units lie at residues 28 to 61, 62 to 101, and 102 to 142; these read GCGPGKVQNGSGNNTRCCSLYAPGKEDCPKERCI, CVTPEYHCGDPQCKICKHYPCQPGQRVESQGDIVFGFRCV, and ACAM…AVCI. Disulfide bonds link Cys-29-Cys-44, Cys-62-Cys-74, Cys-69-Cys-82, Cys-103-Cys-122, and Cys-116-Cys-141. N-linked (GlcNAc...) asparagine glycosylation is found at Asn-36 and Asn-40. 2 N-linked (GlcNAc...) asparagine glycosylation sites follow: Asn-121 and Asn-134. Residues 154-174 traverse the membrane as a helical segment; sequence LTVIFLVMAACIFFLTTVQLG. The Cytoplasmic portion of the chain corresponds to 175–228; that stretch reads LHIWQLRRQHMCPRETQPFAEVQLSAEDACSFQFPEEERGEQTEEKCHLGGRWP.

As to quaternary structure, binds to TRAF1, TRAF2, and TRAF3, but not TRAF5 and TRAF6. Binds through its C-terminus to SIVA1/SIVA. As to expression, preferentially expressed in activated T lymphocytes.

The protein resides in the cell membrane. It localises to the secreted. Functionally, receptor for TNFSF18. Seems to be involved in interactions between activated T-lymphocytes and endothelial cells and in the regulation of T-cell receptor-mediated cell death. Mediated NF-kappa-B activation via the TRAF2/NIK pathway. This chain is Tumor necrosis factor receptor superfamily member 18 (Tnfrsf18), found in Mus musculus (Mouse).